The following is a 244-amino-acid chain: Sepiapterin reductase (244 aa).

NADP(+) contacts are provided by residues 9 to 15, 40 to 42, 66 to 67, and Asn93; these read GAGKGIG, SRT, and DI. Phe99 is a substrate binding site. An NADP(+)-binding site is contributed by Thr116. 2 residues coordinate substrate: Ser145 and Tyr158. NADP(+) is bound by residues Tyr158, Lys162, and 191–196; that span reads VYTPMW. Substrate is bound at residue Trp196.

The protein belongs to the short-chain dehydrogenases/reductases (SDR) family. As to quaternary structure, homodimer.

The protein localises to the cytoplasm. The enzyme catalyses L-threo-7,8-dihydrobiopterin + NADP(+) = L-sepiapterin + NADPH + H(+). It catalyses the reaction L-threo-tetrahydrobiopterin + 2 NADP(+) = 6-pyruvoyl-5,6,7,8-tetrahydropterin + 2 NADPH + 2 H(+). Its activity is regulated as follows. Slightly inhibited by N-acetyldopamine but not by N-acetylserotonin or melatonin. Its function is as follows. Catalyzes the final reductions in tetra-hydrobiopterin biosynthesis to form 5,6,7,8-tetrahydrobiopterin. The sequence is that of Sepiapterin reductase from Chlorobaculum tepidum (strain ATCC 49652 / DSM 12025 / NBRC 103806 / TLS) (Chlorobium tepidum).